The sequence spans 328 residues: Glucokinase (328 aa).

Ala16–Thr21 is an ATP binding site.

This sequence belongs to the bacterial glucokinase family.

It localises to the cytoplasm. The enzyme catalyses D-glucose + ATP = D-glucose 6-phosphate + ADP + H(+). In Neisseria gonorrhoeae (strain ATCC 700825 / FA 1090), this protein is Glucokinase.